The following is a 376-amino-acid chain: 5-amino-6-(D-ribitylamino)uracil--L-tyrosine 4-hydroxyphenyl transferase 1 (376 aa).

The Radical SAM core domain occupies 50-284 (VTYVVNRNIN…AISRILLHGH (235 aa)). Residues C64, C68, and C71 each contribute to the [4Fe-4S] cluster site.

This sequence belongs to the radical SAM superfamily. CofH family. As to quaternary structure, consists of two subunits, CofG and CofH. [4Fe-4S] cluster serves as cofactor.

It catalyses the reaction 5-amino-6-(D-ribitylamino)uracil + L-tyrosine + S-adenosyl-L-methionine = 5-amino-5-(4-hydroxybenzyl)-6-(D-ribitylimino)-5,6-dihydrouracil + 2-iminoacetate + 5'-deoxyadenosine + L-methionine + H(+). It functions in the pathway cofactor biosynthesis; coenzyme F0 biosynthesis. Its function is as follows. Catalyzes the radical-mediated synthesis of 5-amino-5-(4-hydroxybenzyl)-6-(D-ribitylimino)-5,6-dihydrouracil from 5-amino-6-(D-ribitylamino)uracil and L-tyrosine. The sequence is that of 5-amino-6-(D-ribitylamino)uracil--L-tyrosine 4-hydroxyphenyl transferase 1 from Methanosarcina barkeri (strain Fusaro / DSM 804).